Reading from the N-terminus, the 453-residue chain is Gamma-aminobutyric acid receptor subunit alpha-6 (453 aa).

A signal peptide spans 1 to 19 (MVLLLPWLFIILWLENAQA). The Extracellular portion of the chain corresponds to 20–243 (QLEDEGNFYS…FHLQRKMGYF (224 aa)). N-linked (GlcNAc...) asparagine glycosylation occurs at Asn-31. Arg-84 contacts 4-aminobutanoate. Asn-128 and Asn-141 each carry an N-linked (GlcNAc...) asparagine glycan. Residue Thr-147 participates in 4-aminobutanoate binding. A disulfide bridge connects residues Cys-156 and Cys-170. The chain crosses the membrane as a helical span at residues 244–264 (MIQIYTPCIMTVILSQVSFWI). The Cytoplasmic segment spans residues 265 to 270 (NKESVP). A helical membrane pass occupies residues 271–290 (ARTVFGITTVLTMTTLSISA). At 291 to 304 (RHSLPKVSYATAMD) the chain is on the extracellular side. A helical transmembrane segment spans residues 305-325 (WFIAVCFAFVFSALIEFAAVN). The Cytoplasmic segment spans residues 326 to 422 (YFTNLQSQKA…GTSKIDQYSR (97 aa)). Ser-375 is subject to Phosphoserine. Residues 423-443 (ILFPVAFAGFNLVYWIVYLSK) form a helical membrane-spanning segment. The Extracellular portion of the chain corresponds to 444 to 453 (DTMEVSSTVE).

It belongs to the ligand-gated ion channel (TC 1.A.9) family. Gamma-aminobutyric acid receptor (TC 1.A.9.5) subfamily. GABRA6 sub-subfamily. In terms of assembly, heteropentamer, formed by a combination of alpha (GABRA1-6), beta (GABRB1-3), gamma (GABRG1-3), delta (GABRD), epsilon (GABRE), rho (GABRR1-3), pi (GABRP) and theta (GABRQ) chains, each subunit exhibiting distinct physiological and pharmacological properties. Binds UBQLN1. As to expression, expressed in brain, in cerebellar granule cells.

It is found in the postsynaptic cell membrane. It localises to the cell membrane. It catalyses the reaction chloride(in) = chloride(out). Alpha subunit of the heteropentameric ligand-gated chloride channel gated by gamma-aminobutyric acid (GABA), a major inhibitory neurotransmitter in the brain. GABA-gated chloride channels, also named GABA(A) receptors (GABAAR), consist of five subunits arranged around a central pore and contain GABA active binding site(s) located at the alpha and beta subunit interface(s). When activated by GABA, GABAARs selectively allow the flow of chloride anions across the cell membrane down their electrochemical gradient. Alpha-6/GABRA6 subunits are found at both synaptic and extrasynaptic sites. Chloride influx into the postsynaptic neuron following GABAAR opening decreases the neuron ability to generate a new action potential, thereby reducing nerve transmission. Extrasynaptic alpha-6-containing receptors contribute to the tonic GABAergic inhibition. Alpha-6 subunits are also present on glutamatergic synapses. The polypeptide is Gamma-aminobutyric acid receptor subunit alpha-6 (Mus musculus (Mouse)).